Here is a 96-residue protein sequence, read N- to C-terminus: Dynein light chain roadblock-type 1 (96 aa).

The residue at position 2 (Ala-2) is an N-acetylalanine.

This sequence belongs to the GAMAD family. Homodimer. The cytoplasmic dynein 1 complex consists of two catalytic heavy chains (HCs) and a number of non-catalytic subunits presented by intermediate chains (ICs), light intermediate chains (LICs) and light chains (LCs); the composition seems to vary in respect to the IC, LIC and LC composition. The heavy chain homodimer serves as a scaffold for the probable homodimeric assembly of the respective non-catalytic subunits. The ICs and LICs bind directly to the HC dimer and the LCs assemble on the IC dimer. Interacts with DYNLRB2. Interacts with DYNC1I1 and DYNC1I2. Interacts with RAB6A isoform 1 (GTP-bound); the interaction is direct. Interacts with RAB6A isoform 2 (GDP-bound); the interaction is direct. Interacts with RAB6B (GDP-bound). High expression in heart, liver, brain and pancreas; moderate in placenta, skeletal muscle and kidney; low in lung, prostate, testis, small intestine and colon. Isoform 1 expression is up-regulated in 64% hepatocellular carcinoma (HCC) patients.

Its subcellular location is the cytoplasm. The protein localises to the cytoskeleton. In terms of biological role, acts as one of several non-catalytic accessory components of the cytoplasmic dynein 1 complex that are thought to be involved in linking dynein to cargos and to adapter proteins that regulate dynein function. Cytoplasmic dynein 1 acts as a motor for the intracellular retrograde motility of vesicles and organelles along microtubules. This is Dynein light chain roadblock-type 1 from Homo sapiens (Human).